Consider the following 279-residue polypeptide: Thymidylate synthase (279 aa).

133 to 134 (RR) serves as a coordination point for dUMP. Residue C154 is the Nucleophile of the active site. DUMP-binding positions include 178–181 (RSND), N189, and 219–221 (HIY). D181 contacts (6R)-5,10-methylene-5,6,7,8-tetrahydrofolate. Position 278 (A278) interacts with (6R)-5,10-methylene-5,6,7,8-tetrahydrofolate.

The protein belongs to the thymidylate synthase family. Bacterial-type ThyA subfamily. Homodimer.

Its subcellular location is the cytoplasm. It catalyses the reaction dUMP + (6R)-5,10-methylene-5,6,7,8-tetrahydrofolate = 7,8-dihydrofolate + dTMP. It functions in the pathway pyrimidine metabolism; dTTP biosynthesis. Catalyzes the reductive methylation of 2'-deoxyuridine-5'-monophosphate (dUMP) to 2'-deoxythymidine-5'-monophosphate (dTMP) while utilizing 5,10-methylenetetrahydrofolate (mTHF) as the methyl donor and reductant in the reaction, yielding dihydrofolate (DHF) as a by-product. This enzymatic reaction provides an intracellular de novo source of dTMP, an essential precursor for DNA biosynthesis. The chain is Thymidylate synthase from Streptococcus pyogenes serotype M6 (strain ATCC BAA-946 / MGAS10394).